The sequence spans 571 residues: Urease subunit alpha (571 aa).

The Urease domain maps to 132–571; that stretch reads GGIDAHIHFI…VALAQRYFLF (440 aa). Residues H137, H139, and K220 each contribute to the Ni(2+) site. At K220 the chain carries N6-carboxylysine. Residue H222 coordinates substrate. Ni(2+)-binding residues include H249 and H275. H323 acts as the Proton donor in catalysis. Residue D363 coordinates Ni(2+).

It belongs to the metallo-dependent hydrolases superfamily. Urease alpha subunit family. In terms of assembly, heterotrimer of UreA (gamma), UreB (beta) and UreC (alpha) subunits. Three heterotrimers associate to form the active enzyme. Ni cation is required as a cofactor. In terms of processing, carboxylation allows a single lysine to coordinate two nickel ions.

The protein resides in the cytoplasm. It carries out the reaction urea + 2 H2O + H(+) = hydrogencarbonate + 2 NH4(+). The protein operates within nitrogen metabolism; urea degradation; CO(2) and NH(3) from urea (urease route): step 1/1. The chain is Urease subunit alpha from Halalkalibacterium halodurans (strain ATCC BAA-125 / DSM 18197 / FERM 7344 / JCM 9153 / C-125) (Bacillus halodurans).